We begin with the raw amino-acid sequence, 485 residues long: MPRFVDRVVIHARAGNGGNGCASVHREKFKPLGGPDGGNGGRGGSIVLVVDPQVHTLLDFHFHPHVVAPSGKQGAGSNRDGAAGADLEVRVPDGTVVLDEEGRVLADLVGAGTRFEAAAGGRGGLGNAALASRSRRAPGFALLGEKGQVRELTLELKTVADVGLIGFPSAGKSSLVSTISAAKPKIADYPFTTLVPNLGVVSAGDHTFTVADVPGLIPGASEGRGLGLEFLRHIERCAVLVHVVDCATMEPGRDPISDIEALEAELAAYRPTLQGDSTLGDLAERPRAVVLNKIDVPDARELADFVRDEVAERFGWPVFEVSTVAREGLRPFIFALWDMVRTYREAQPPVVPRRPIIRPIAVDETGFSVHPDGQGGFVVRGTRPERWINQTDFDNDEAVGYLGDRLARLGVEEELLRLGARPGCAVTIGDMTFDWEPQTPAGVDVQMSGRGTDTRLEQTDRVSAAERKIARRERRQSTDEPGGEE.

In terms of domain architecture, Obg spans 2–159 (PRFVDRVVIH…RELTLELKTV (158 aa)). Residues 160 to 341 (ADVGLIGFPS…FIFALWDMVR (182 aa)) form the OBG-type G domain. GTP contacts are provided by residues 166–173 (GFPSAGKS), 191–195 (FTTLV), 212–215 (DVPG), 292–295 (NKID), and 322–324 (STV). S173 and T193 together coordinate Mg(2+). The 79-residue stretch at 359–437 (PIAVDETGFS…IGDMTFDWEP (79 aa)) folds into the OCT domain. The interval 439-485 (TPAGVDVQMSGRGTDTRLEQTDRVSAAERKIARRERRQSTDEPGGEE) is disordered. A compositionally biased stretch (basic and acidic residues) spans 452–468 (TDTRLEQTDRVSAAERK).

This sequence belongs to the TRAFAC class OBG-HflX-like GTPase superfamily. OBG GTPase family. Monomer. The cofactor is Mg(2+).

It localises to the cytoplasm. An essential GTPase which binds GTP, GDP and possibly (p)ppGpp with moderate affinity, with high nucleotide exchange rates and a fairly low GTP hydrolysis rate. Plays a role in control of the cell cycle, stress response, ribosome biogenesis and in those bacteria that undergo differentiation, in morphogenesis control. In Mycobacterium sp. (strain MCS), this protein is GTPase Obg.